Reading from the N-terminus, the 1645-residue chain is Protein MON2 homolog (1645 aa).

The protein belongs to the MON2 family.

May be required for traffic between late Golgi and early endosomes. This Caenorhabditis briggsae protein is Protein MON2 homolog.